The chain runs to 248 residues: PF03932 family protein CutC (248 aa).

The protein belongs to the CutC family. As to quaternary structure, homodimer.

It is found in the cytoplasm. The protein is PF03932 family protein CutC of Escherichia coli O7:K1 (strain IAI39 / ExPEC).